Consider the following 494-residue polypeptide: UPF0371 protein SPH_0451 (494 aa).

Belongs to the UPF0371 family.

The sequence is that of UPF0371 protein SPH_0451 from Streptococcus pneumoniae (strain Hungary19A-6).